We begin with the raw amino-acid sequence, 549 residues long: Sphingosine-1-phosphate transporter SPNS2 (549 aa).

Disordered stretches follow at residues 14-36 and 78-97; these read AEEE…GAGG and PGCA…PASL. 11 helical membrane-spanning segments follow: residues 141 to 161, 169 to 189, 202 to 222, 229 to 249, 261 to 281, 320 to 340, 364 to 384, 398 to 418, 422 to 442, 466 to 486, and 507 to 527; these read GLLQ…FGYL, VILS…SFIP, LVGI…GDLF, LMLS…YITG, WALR…LILV, LATS…PLYL, LIFG…GAGA, LVCA…FVAA, IVGA…NWAI, TSHL…SDLI, and LCPF…LFFL.

It belongs to the major facilitator superfamily. Spinster (TC 2.A.1.49) family. In terms of tissue distribution, expression is high in the lungs and liver, low in the lymph nodes, spleen and bone marrow, and very low but detectable in the thymus. Not expressed in red blood cells. Also expressed in the inner ear: expressed in the cochlea, both in the lateral wall and organ of Corti.

It localises to the cell membrane. Its subcellular location is the endosome membrane. The enzyme catalyses sphing-4-enine 1-phosphate(in) = sphing-4-enine 1-phosphate(out). The catalysed reaction is sphinganine 1-phosphate(in) = sphinganine 1-phosphate(out). Its function is as follows. Lipid transporter that specifically mediates export of sphingosine-1-phosphate (sphing-4-enine 1-phosphate, S1P) and sphinganine-1-phosphate in the lymph, thereby playing a role in lymphocyte trafficking. S1P is a bioactive signaling molecule that regulates many physiological processes important for the development and for the immune system. Regulates levels of S1P and the S1P gradient that exists between the high circulating concentrations of S1P and low tissue levels that control lymphocyte trafficking. Required for the egress of T-cells from lymph nodes during an immune response by mediating S1P secretion, which generates a gradient that enables activated T-cells to access lymph. Also required for the egress of immature B-cells from the bone marrow. In contrast, it does not mediate S1P release from red blood cells. Involved in auditory function: S1P release in the inner ear is required for maintenance of the endocochlear potential in the cochlea. In addition to export, also able to mediate S1P import. The chain is Sphingosine-1-phosphate transporter SPNS2 from Mus musculus (Mouse).